A 528-amino-acid polypeptide reads, in one-letter code: GMP synthase [glutamine-hydrolyzing] (528 aa).

One can recognise a Glutamine amidotransferase type-1 domain in the interval 13 to 204 (SILILDFGSQ…VYKISCCAAD (192 aa)). Cys90 acts as the Nucleophile in catalysis. Residues His178 and Glu180 contribute to the active site. Residues 205–403 (WTTETYIEET…LGLPAEIIKR (199 aa)) form the GMPS ATP-PPase domain. Residue 232–238 (SGGVDSS) coordinates ATP.

In terms of assembly, homodimer.

The catalysed reaction is XMP + L-glutamine + ATP + H2O = GMP + L-glutamate + AMP + diphosphate + 2 H(+). Its pathway is purine metabolism; GMP biosynthesis; GMP from XMP (L-Gln route): step 1/1. Catalyzes the synthesis of GMP from XMP. This Prochlorococcus marinus (strain MIT 9215) protein is GMP synthase [glutamine-hydrolyzing].